The chain runs to 757 residues: Serine/threonine-protein phosphatase 2A 56 kDa regulatory subunit delta isoform (757 aa).

The segment covering 1–11 (MMRGFKQRLIK) has biased composition (basic residues). 2 disordered regions span residues 1–172 (MMRG…EDHA) and 188–250 (ISNA…NPDT). Low complexity predominate over residues 12-21 (KTTGSSSSSS). The span at 23-34 (KKKDKEKEKEKS) shows a compositional bias: basic and acidic residues. Composition is skewed to low complexity over residues 35 to 66 (STTS…GSKS), 86 to 119 (SSTS…STKK), and 128 to 147 (QSKQ…SSSS). A compositionally biased stretch (basic and acidic residues) spans 160–172 (TKDDKSTSGEDHA). Residues 197–216 (SSDVENGNSNNNNMNINTSN) are compositionally biased toward low complexity. Over residues 217–228 (TQDANHASSQSI) the composition is skewed to polar residues. Residues threonine 242 and threonine 257 each carry the phosphothreonine modification. The tract at residues 734–757 (SFNTASENNTLNEENENDCDSEIQ) is disordered. A compositionally biased stretch (acidic residues) spans 746 to 757 (EENENDCDSEIQ).

The protein belongs to the phosphatase 2A regulatory subunit B family. In terms of assembly, PP2A consists of a common heterodimeric core enzyme, composed of a 36 kDa catalytic subunit (subunit C) and a 65 kDa constant regulatory subunit (PR65 or subunit A), that associates with a variety of regulatory subunits. Proteins that associate with the core dimer include three families of regulatory subunits B (the R2/B/PR55/B55, R3/B''/PR72/PR130/PR59 and R5/B'/B56 families), the 48 kDa variable regulatory subunit, viral proteins, and cell signaling molecules.

The protein localises to the cytoplasm. The protein resides in the nucleus. In terms of biological role, the B regulatory subunit might modulate substrate selectivity and catalytic activity, and might also direct the localization of the catalytic enzyme to a particular subcellular compartment. Functionally, multicopy suppressor of ROX3 and HSP60. The polypeptide is Serine/threonine-protein phosphatase 2A 56 kDa regulatory subunit delta isoform (RTS1) (Saccharomyces cerevisiae (strain ATCC 204508 / S288c) (Baker's yeast)).